The following is a 241-amino-acid chain: Small ribosomal subunit protein uS2 (241 aa).

The protein belongs to the universal ribosomal protein uS2 family.

This is Small ribosomal subunit protein uS2 from Cronobacter sakazakii (strain ATCC BAA-894) (Enterobacter sakazakii).